The following is a 1070-amino-acid chain: DNA-directed RNA polymerase subunit beta (1070 aa).

Belongs to the RNA polymerase beta chain family. In plastids the minimal PEP RNA polymerase catalytic core is composed of four subunits: alpha, beta, beta', and beta''. When a (nuclear-encoded) sigma factor is associated with the core the holoenzyme is formed, which can initiate transcription.

It is found in the plastid. It localises to the chloroplast. The catalysed reaction is RNA(n) + a ribonucleoside 5'-triphosphate = RNA(n+1) + diphosphate. DNA-dependent RNA polymerase catalyzes the transcription of DNA into RNA using the four ribonucleoside triphosphates as substrates. The sequence is that of DNA-directed RNA polymerase subunit beta from Populus alba (White poplar).